We begin with the raw amino-acid sequence, 291 residues long: 4-diphosphocytidyl-2-C-methyl-D-erythritol kinase (291 aa).

Lysine 12 is an active-site residue. Residue 95–105 participates in ATP binding; it reads PDGGGLGGGSS. Aspartate 137 is a catalytic residue.

The protein belongs to the GHMP kinase family. IspE subfamily.

It catalyses the reaction 4-CDP-2-C-methyl-D-erythritol + ATP = 4-CDP-2-C-methyl-D-erythritol 2-phosphate + ADP + H(+). It participates in isoprenoid biosynthesis; isopentenyl diphosphate biosynthesis via DXP pathway; isopentenyl diphosphate from 1-deoxy-D-xylulose 5-phosphate: step 3/6. In terms of biological role, catalyzes the phosphorylation of the position 2 hydroxy group of 4-diphosphocytidyl-2C-methyl-D-erythritol. The sequence is that of 4-diphosphocytidyl-2-C-methyl-D-erythritol kinase from Alkalilimnicola ehrlichii (strain ATCC BAA-1101 / DSM 17681 / MLHE-1).